The sequence spans 188 residues: uncharacterized protein (188 aa).

Residues 57–80 (NDDVAPVAEGPKQERRSPSRNIGR) are disordered.

This sequence belongs to the transposase 25 family.

This is an uncharacterized protein from Sinorhizobium fredii (strain NBRC 101917 / NGR234).